Reading from the N-terminus, the 682-residue chain is Potassium-transporting ATPase ATP-binding subunit (682 aa).

The next 4 membrane-spanning stretches (helical) occupy residues 34 to 54 (PVMF…LAMV), 62 to 82 (ALFT…ANFA), 219 to 239 (IALT…TATL), and 254 to 274 (VLVA…LSAI). Aspartate 307 serves as the catalytic 4-aspartylphosphate intermediate. ATP is bound by residues aspartate 344, glutamate 348, 377–384 (FTAQSRMS), and lysine 395. Aspartate 518 and aspartate 522 together coordinate Mg(2+). Transmembrane regions (helical) follow at residues 588–608 (FAII…LNVM), 616–636 (AILS…PLAL), and 662–682 (LVVP…LGLA).

The protein belongs to the cation transport ATPase (P-type) (TC 3.A.3) family. Type IA subfamily. The system is composed of three essential subunits: KdpA, KdpB and KdpC.

The protein localises to the cell inner membrane. It catalyses the reaction K(+)(out) + ATP + H2O = K(+)(in) + ADP + phosphate + H(+). Part of the high-affinity ATP-driven potassium transport (or Kdp) system, which catalyzes the hydrolysis of ATP coupled with the electrogenic transport of potassium into the cytoplasm. This subunit is responsible for energy coupling to the transport system and for the release of the potassium ions to the cytoplasm. In Salmonella schwarzengrund (strain CVM19633), this protein is Potassium-transporting ATPase ATP-binding subunit.